The sequence spans 69 residues: U2-agatoxin-Ao1i (69 aa).

The N-terminal stretch at 1 to 20 (MKAIISLLLISAMVFSMIEA) is a signal peptide. The propeptide occupies 21 to 34 (VPVXXGLQLFESER). Intrachain disulfides connect cysteine 36-cysteine 52, cysteine 43-cysteine 57, and cysteine 51-cysteine 67. Residue leucine 68 is modified to Leucine amide.

It belongs to the neurotoxin 01 (U2-agtx) family. Expressed by the venom gland.

The protein resides in the secreted. In terms of biological role, insect active toxin causing rapid but reversible paralysis in crickets. No activity shown in mammals. Does not show effect on mammalian voltage-gated calcium channels. The chain is U2-agatoxin-Ao1i from Agelena orientalis (Funnel-web spider).